The following is a 62-amino-acid chain: Small ribosomal subunit protein bS21 (62 aa).

Positions 38-62 (YEKPSERRKRKMNAAVRKNRRTRHG) are disordered.

It belongs to the bacterial ribosomal protein bS21 family.

This Gemmatimonas aurantiaca (strain DSM 14586 / JCM 11422 / NBRC 100505 / T-27) protein is Small ribosomal subunit protein bS21.